A 332-amino-acid chain; its full sequence is UPF0285 protein MK0078 (332 aa).

It belongs to the UPF0285 family.

The polypeptide is UPF0285 protein MK0078 (Methanopyrus kandleri (strain AV19 / DSM 6324 / JCM 9639 / NBRC 100938)).